A 208-amino-acid chain; its full sequence is Small ribosomal subunit protein uS4 (208 aa).

Positions 98-158 (CRLDTVSYRM…EKAKNHLRIK (61 aa)) constitute an S4 RNA-binding domain.

This sequence belongs to the universal ribosomal protein uS4 family. Part of the 30S ribosomal subunit. Contacts protein S5. The interaction surface between S4 and S5 is involved in control of translational fidelity.

Functionally, one of the primary rRNA binding proteins, it binds directly to 16S rRNA where it nucleates assembly of the body of the 30S subunit. In terms of biological role, with S5 and S12 plays an important role in translational accuracy. This is Small ribosomal subunit protein uS4 from Nitrosospira multiformis (strain ATCC 25196 / NCIMB 11849 / C 71).